Here is a 431-residue protein sequence, read N- to C-terminus: Polygalacturonase ADPG1 (431 aa).

Positions 1 to 23 (MARCCRHLAVFLCVLLMLSLCKA) are cleaved as a signal peptide. 2 PbH1 repeats span residues 223–249 (CNKVEVSNVEITAPGDSPNTDGIHITN) and 250–271 (TQNIRVSNSDIGTGDDCISIED). The active-site Proton donor is the aspartate 264. Histidine 287 is a catalytic residue. 3 PbH1 repeats span residues 303–324 (VSGINVDGAKFSESDNGVRIKT), 332–353 (AKNIKFQNIRMENVKNPIIIDQ), and 398–420 (CQGIVLENVKIKGGTASCKNANV).

The protein belongs to the glycosyl hydrolase 28 family. In terms of tissue distribution, expressed in flower buds and siliques, in the dehiscence zone of anthers (stomium cells) and maturing siliques. Expressed in stigma during pollen tube growth. Not expressed in seeds or in the floral part or leaf abscission zone but found at the junction between the seed and the funiculus at the site of seed abscission.

The protein localises to the secreted. Its subcellular location is the cell wall. The protein resides in the cytoplasm. The catalysed reaction is (1,4-alpha-D-galacturonosyl)n+m + H2O = (1,4-alpha-D-galacturonosyl)n + (1,4-alpha-D-galacturonosyl)m.. In terms of biological role, polygalacturonase involved in cell separation in the final stages of pod shatter and in anther dehiscence. Not involved in floral organ abscission. This chain is Polygalacturonase ADPG1 (ADPG1), found in Arabidopsis thaliana (Mouse-ear cress).